Reading from the N-terminus, the 4923-residue chain is Bridge-like lipid transfer protein family member 1 (4923 aa).

Residues 25–45 traverse the membrane as a helical segment; it reads FVWLLVATIMSCGWIIYLTYY. Disordered stretches follow at residues 160 to 179, 606 to 631, 1203 to 1277, 1300 to 1334, 1357 to 1400, 1471 to 1494, 1630 to 1660, 1878 to 1948, 2191 to 2235, 2262 to 2281, 2355 to 2375, 2550 to 2655, 2885 to 2910, 3564 to 3596, 3645 to 3695, 3739 to 3797, 3848 to 3884, 4017 to 4071, 4102 to 4124, 4249 to 4309, and 4797 to 4827; these read NRDEEKGREQRDKSLESVHI, HSKSPPDNNMPAEGQGAPPKNSKPRW, SLHV…SARL, FSSEVSRSDENVLDSPRQRRSYGSFPFTPSADSST, TEEF…SVEG, TNKRTSKSSLHRPLDLDTPTSEES, SAAKQEHKISKTEGTTPGSLSTPHGQTDLSI, RDGV…PDSS, SKSH…LQCN, PHRANEQTATKSSSLTRTGN, NTLDTHSQHSHSQHSTSQEDL, RYTA…SEQS, IRQPSNTPPPNREDTPTPQPSEVSIN, YSNSRSKSISAAGRPPMKRSDRPREDLPDIKVE, FSPT…RKSA, LHPS…SLQS, GMRDAPTPAPAPAASGPGKTNTLLSPPPPPLPSAKGK, PTSA…TGPP, AVTGLPPGPGPLGSVEDEASSVT, DGQT…AAAQ, and RMFASRPGQKSPTTQQDEPSSDKKEEREKEE. The span at 1210–1226 shows a compositional bias: low complexity; that stretch reads SHSSASSSEENSSSSAA. Polar residues predominate over residues 1237–1248; the sequence is PSPSTELMNVTT. The segment covering 1260–1271 has biased composition (low complexity); the sequence is SPLRSPLKRQSS. The span at 1641-1658 shows a compositional bias: polar residues; that stretch reads TEGTTPGSLSTPHGQTDL. The span at 1887–1898 shows a compositional bias: low complexity; the sequence is SSGSQTGSGYST. Residues 1907 to 1920 show a composition bias toward polar residues; the sequence is NDAQSPASEPNNNS. Positions 1921-1931 are enriched in acidic residues; it reads DSDEQDEGVES. Composition is skewed to polar residues over residues 2208 to 2218 and 2267 to 2281; these read PYQSLSYTSGD and EQTATKSSSLTRTGN. Polar residues predominate over residues 2550 to 2560; that stretch reads RYTAGSSSPTP. The span at 2606-2624 shows a compositional bias: basic and acidic residues; sequence TRSREPRGRGTLGRSERRT. The span at 3581 to 3595 shows a compositional bias: basic and acidic residues; sequence KRSDRPREDLPDIKV. The segment covering 3746–3770 has biased composition (basic and acidic residues); sequence TEHEDLALRRSCERSSRSLDQDSPP. Polar residues predominate over residues 4017-4039; sequence PTSATYPSEGQHTPSSTPPSVHN. The segment covering 4044-4056 has biased composition (low complexity); the sequence is PGGPSTGLGSPLG. Composition is skewed to polar residues over residues 4249 to 4268, 4276 to 4286, and 4804 to 4814; these read DGQTTQHPSSSVFTDTTPSH, TGRTRSVSDSS, and GQKSPTTQQDE. A compositionally biased stretch (basic and acidic residues) spans 4816–4827; that stretch reads SSDKKEEREKEE.

The protein resides in the cell membrane. The protein localises to the endoplasmic reticulum membrane. Its subcellular location is the mitochondrion membrane. Functionally, tube-forming lipid transport protein which provides phosphatidylethanolamine for glycosylphosphatidylinositol (GPI) anchor synthesis in the endoplasmic reticulum. Plays a role in endosomal trafficking and endosome recycling. Also involved in the actin cytoskeleton and cilia structural dynamics. Acts as a regulator of phagocytosis. The sequence is that of Bridge-like lipid transfer protein family member 1 (bltp1) from Danio rerio (Zebrafish).